We begin with the raw amino-acid sequence, 353 residues long: Aromatic amino acid aminotransferase (353 aa).

K217 is modified (N6-(pyridoxal phosphate)lysine).

It belongs to the class-II pyridoxal-phosphate-dependent aminotransferase family. Homodimer. The cofactor is pyridoxal 5'-phosphate.

The catalysed reaction is an aromatic L-alpha-amino acid + 2-oxoglutarate = an aromatic oxo-acid + L-glutamate. In terms of biological role, aminotransferase that catalyzes the conversion of aromatic amino acids and 2-oxoglutarate into corresponding aromatic oxo acids and L-glutamate. The sequence is that of Aromatic amino acid aminotransferase from Mycobacterium bovis (strain ATCC BAA-935 / AF2122/97).